The following is a 711-amino-acid chain: Denticleless protein homolog B (711 aa).

WD repeat units follow at residues 47 to 89 (GRAV…MQRL), 96 to 135 (AHTNAVFDIAWVPGEHKLVTASGDQTAKLWDVKAGELIGE), and 138 to 178 (GHQC…KDGF). Residues 168-171 (WDTR) carry the DDB1-binding motif motif. The Nuclear localization signal motif lies at 197-204 (PSKVKKRK). WD repeat units follow at residues 215-254 (DSQQSVTVVIFQDEYTVISAGAVDGVVKIWDLRKNYSTYR), 270-309 (TRKLGYSSLVLDPTGTNLFASCTDDNVYMFNATGLKTDPV), 314-355 (GHQN…AAPI), and 359-398 (GHCQEVTSVAWCQSDFTKIATCSDDNTVRIWRLNRSSEDS). The short motif at 244 to 247 (WDLR) is the DDB1-binding motif element. Disordered stretches follow at residues 473 to 524 (QTPK…AFTP) and 601 to 698 (EFDQ…TPGS). Polar residues-rich tracts occupy residues 504-516 (TPKSSKGTDSKTP) and 606-627 (LSPSPSTSLHMNATDNPPTLSP). Basic and acidic residues predominate over residues 631–642 (MKSDFVDKENSS). The segment covering 658–675 (DNSSPQFKSSSSPSSRNS) has biased composition (low complexity). The segment covering 684–697 (NAPNSPVSVPTTPG) has biased composition (polar residues).

The protein belongs to the WD repeat cdt2 family. In terms of assembly, component of the DCX(DTL) E3 ubiquitin ligase complex, at least composed of cul4 (cul4a or cul4b), ddb1, dtl/cdt2 and rbx1.

It is found in the nucleus. Its subcellular location is the cytoplasm. The protein resides in the cytoskeleton. The protein localises to the microtubule organizing center. It localises to the centrosome. It is found in the chromosome. It functions in the pathway protein modification; protein ubiquitination. In terms of biological role, substrate-specific adapter of a DCX (DDB1-CUL4-X-box) E3 ubiquitin-protein ligase complex required for cell cycle control, DNA damage response and translesion DNA synthesis. The DCX(DTL) complex, also named CRL4(CDT2) complex, mediates the polyubiquitination and subsequent degradation of CDT1, CDKN1A/p21(CIP1), KMT5A and SDE2. CDT1 degradation in response to DNA damage is necessary to ensure proper cell cycle regulation of DNA replication. CDKN1A/p21(CIP1) degradation during S phase or following UV irradiation is essential to control replication licensing. KMT5A degradation is also important for a proper regulation of mechanisms such as TGF-beta signaling, cell cycle progression, DNA repair and cell migration. Most substrates require their interaction with PCNA for their polyubiquitination: substrates interact with PCNA via their PIP-box, and those containing the 'K+4' motif in the PIP box, recruit the DCX(DTL) complex, leading to their degradation. In undamaged proliferating cells, the DCX(DTL) complex also promotes the 'Lys-164' monoubiquitination of PCNA, thereby being involved in PCNA-dependent translesion DNA synthesis. May play a role in the regulation of the circadian clock. The protein is Denticleless protein homolog B (dtl-b) of Xenopus laevis (African clawed frog).